The following is a 61-amino-acid chain: Metallothionein-I, hippocampal (61 aa).

Position 1 is an N-acetylmethionine (methionine 1). Positions 1–29 (MDPNCSCATGDSCACASTCKCKECKCTSC) are beta. A divalent metal cation is bound by residues cysteine 5, cysteine 7, cysteine 13, cysteine 15, cysteine 19, cysteine 21, cysteine 24, cysteine 26, cysteine 29, cysteine 33, cysteine 34, cysteine 36, cysteine 37, cysteine 41, cysteine 44, cysteine 48, cysteine 50, and cysteine 57. The tract at residues 30–61 (KKSCCSCCPVGCAKCAQGCICKGASDKCSCCA) is alpha. Phosphoserine is present on serine 58. Residues cysteine 59 and cysteine 60 each contribute to the a divalent metal cation site.

This sequence belongs to the metallothionein superfamily. Type 1 family.

Metallothioneins have a high content of cysteine residues that bind various heavy metals; these proteins are transcriptionally regulated by both heavy metals and glucocorticoids. This isoform may play a role in regulating the transport, accumulation, and compartmentation of zinc in the hippocampus. In Bos taurus (Bovine), this protein is Metallothionein-I, hippocampal.